The sequence spans 461 residues: Probable ornithine decarboxylase (461 aa).

The tract at residues 1–35 is disordered; sequence MTGTKRNGEEVVNENNNNNVAEETNKKAKVDESST. Over residues 13-22 the composition is skewed to low complexity; the sequence is NENNNNNVAE. Basic and acidic residues predominate over residues 23 to 32; sequence ETNKKAKVDE. Lys-116 bears the N6-(pyridoxal phosphate)lysine mark. Pyridoxal 5'-phosphate contacts are provided by residues Ser-247, Gly-284, and 317 to 320; that span reads EPGR. 375-376 lines the substrate pocket; the sequence is FD. Cys-402 serves as the catalytic Proton donor; shared with dimeric partner. A substrate-binding site is contributed by Asp-403. Tyr-431 is a pyridoxal 5'-phosphate binding site.

The protein belongs to the Orn/Lys/Arg decarboxylase class-II family. Homodimer. Only the dimer is catalytically active, as the active sites are constructed of residues from both monomers. The cofactor is pyridoxal 5'-phosphate.

The enzyme catalyses L-ornithine + H(+) = putrescine + CO2. It functions in the pathway amine and polyamine biosynthesis; putrescine biosynthesis via L-ornithine pathway; putrescine from L-ornithine: step 1/1. With respect to regulation, inhibited by antizyme (AZ) in response to polyamine levels. AZ inhibits the assembly of the functional homodimer by binding to ODC monomers and targeting them for ubiquitin-independent proteolytic destruction by the 26S proteasome. Catalyzes the first and rate-limiting step of polyamine biosynthesis that converts ornithine into putrescine, which is the precursor for the polyamines, spermidine and spermine. Polyamines are essential for cell proliferation and are implicated in cellular processes, ranging from DNA replication to apoptosis. This is Probable ornithine decarboxylase (odc) from Dictyostelium discoideum (Social amoeba).